Here is a 204-residue protein sequence, read N- to C-terminus: ATP phosphoribosyltransferase (204 aa).

This sequence belongs to the ATP phosphoribosyltransferase family. Short subfamily. In terms of assembly, heteromultimer composed of HisG and HisZ subunits.

The protein resides in the cytoplasm. It catalyses the reaction 1-(5-phospho-beta-D-ribosyl)-ATP + diphosphate = 5-phospho-alpha-D-ribose 1-diphosphate + ATP. It functions in the pathway amino-acid biosynthesis; L-histidine biosynthesis; L-histidine from 5-phospho-alpha-D-ribose 1-diphosphate: step 1/9. Functionally, catalyzes the condensation of ATP and 5-phosphoribose 1-diphosphate to form N'-(5'-phosphoribosyl)-ATP (PR-ATP). Has a crucial role in the pathway because the rate of histidine biosynthesis seems to be controlled primarily by regulation of HisG enzymatic activity. The polypeptide is ATP phosphoribosyltransferase (Staphylococcus aureus (strain MRSA252)).